Reading from the N-terminus, the 622-residue chain is MKRTTRYSRKYVPSIDGLRALAVIAVIAYHLNFSWAKGGFIGVDIFFVLSGYLITNILLTQWEKNQSLQLKQFWIRRFRRLIPAVYVMIVVVVIYSVFFHPEILKNLRGDAIASFFYVSNWWFIFHNVSYFDSFGLPSPLKNLWSLAIEEQFYLIWPAFLLVFLKWVKNPKLLLKIVIGLGLLSAVWMTILYVPGTDPSRVYYGTDTRAFDLLSGCALAFVWPFNRLSPVVPRKSKAVLNIAGTISILCFILFTAFVSEYQPFLYRGGLLFVAILGVIMIATISHPASYLSKIFSFKPLRWIGTRSYGIYLWHYPIITLTTPVLEITQPNIWRAILQVAATFIIAELSFRFIETPIRKNGFINYFKGFKDKNYFIWKNKPVGKWLSIAGVVAVLAIFTLGMSNVLSVNTNAEKQQTSVKTTTSTPDEKKDDKKEDKATKDKEADSNKASEQKETQKPDNKNKSAATPKTIITQTVAIGDSVMLDIEPYLKEAVPNITIDGLVGRQLRDAITTATGYKKFNSENSSVILELGTNGPFTEDQLNDLLDQFDKATIYLVNTRVPRGWQSDVNKSIANAASRPNVTVVDWYSRSSGQSQYFAPDGVHLTKAGAQAYVAMLTSVMNK.

11 consecutive transmembrane segments (helical) span residues 11–31, 39–59, 81–101, 143–163, 173–193, 212–232, 237–257, 267–287, 307–327, 334–354, and 387–407; these read YVPSIDGLRALAVIAVIAYHL, GFIGVDIFFVLSGYLITNILL, LIPAVYVMIVVVVIYSVFFHP, LWSLAIEEQFYLIWPAFLLVF, LLKIVIGLGLLSAVWMTILYV, LLSGCALAFVWPFNRLSPVVP, AVLNIAGTISILCFILFTAFV, GGLLFVAILGVIMIATISHPA, YGIYLWHYPIITLTTPVLEIT, AILQVAATFIIAELSFRFIET, and IAGVVAVLAIFTLGMSNVLSV. The tract at residues 412 to 467 is disordered; that stretch reads EKQQTSVKTTTSTPDEKKDDKKEDKATKDKEADSNKASEQKETQKPDNKNKSAATP. The segment covering 413 to 424 has biased composition (low complexity); sequence KQQTSVKTTTST. Basic and acidic residues predominate over residues 425 to 461; sequence PDEKKDDKKEDKATKDKEADSNKASEQKETQKPDNKN. Catalysis depends on residues Ser480, Asp600, and His603.

It belongs to the acyltransferase 3 family.

It is found in the cell membrane. The protein localises to the secreted. The protein resides in the cell wall. In terms of biological role, responsible for O-acetylation at the C6-hydroxyl group of N-acetylmuramyl residues, forming the corresponding N,6-O-diacetylmuramic acid of the peptidoglycan. O-acetylation of the peptidoglycan is the major determinant for lysozyme resistance. Critical for virulence and escape from innate immune response of the host. Involved at both early and later stages of listeriosis in the mouse model of infection. Required for successful host colonization and for intracellular survival of bacteria in macrophages of the infected host. Controls the production of inflammatory mediators in the liver of the infected host. Confers resistance to host antimicrobial molecules and to cell wall-targeting molecules such as beta-lactam antibiotics and bacteriocins. This chain is Peptidoglycan O-acetyltransferase OatA, found in Listeria monocytogenes serovar 1/2a (strain ATCC BAA-679 / EGD-e).